Here is a 338-residue protein sequence, read N- to C-terminus: Beta-ketoacyl-[acyl-carrier-protein] synthase III (338 aa).

Catalysis depends on residues Cys-119 and His-261. The ACP-binding stretch occupies residues 262-266 (QANQR). Asn-291 is an active-site residue.

Belongs to the thiolase-like superfamily. FabH family. In terms of assembly, homodimer.

The protein resides in the cytoplasm. The catalysed reaction is malonyl-[ACP] + acetyl-CoA + H(+) = 3-oxobutanoyl-[ACP] + CO2 + CoA. It participates in lipid metabolism; fatty acid biosynthesis. Its function is as follows. Catalyzes the condensation reaction of fatty acid synthesis by the addition to an acyl acceptor of two carbons from malonyl-ACP. Catalyzes the first condensation reaction which initiates fatty acid synthesis and may therefore play a role in governing the total rate of fatty acid production. Possesses both acetoacetyl-ACP synthase and acetyl transacylase activities. Its substrate specificity determines the biosynthesis of branched-chain and/or straight-chain of fatty acids. The chain is Beta-ketoacyl-[acyl-carrier-protein] synthase III from Prochlorococcus marinus (strain SARG / CCMP1375 / SS120).